The primary structure comprises 211 residues: Dibenzothiophene metabolism operon protein DoxH (211 aa).

Its pathway is aromatic compound metabolism; naphthalene degradation. May be involved in the conversion of 2-hydroxy-4-(2'-oxo-3,5-cyclohexadienyl)-buta-2,4-dienoate to cis-O-hydroxybenzylidenepyruvate. DoxH and doxJ encode different enzymes that may have interchangeable functions. This is Dibenzothiophene metabolism operon protein DoxH (doxH) from Pseudomonas sp. (strain C18).